The following is a 258-amino-acid chain: Phosphoribosylaminoimidazole-succinocarboxamide synthase (258 aa).

The protein belongs to the SAICAR synthetase family.

The catalysed reaction is 5-amino-1-(5-phospho-D-ribosyl)imidazole-4-carboxylate + L-aspartate + ATP = (2S)-2-[5-amino-1-(5-phospho-beta-D-ribosyl)imidazole-4-carboxamido]succinate + ADP + phosphate + 2 H(+). It functions in the pathway purine metabolism; IMP biosynthesis via de novo pathway; 5-amino-1-(5-phospho-D-ribosyl)imidazole-4-carboxamide from 5-amino-1-(5-phospho-D-ribosyl)imidazole-4-carboxylate: step 1/2. The sequence is that of Phosphoribosylaminoimidazole-succinocarboxamide synthase from Sphingopyxis alaskensis (strain DSM 13593 / LMG 18877 / RB2256) (Sphingomonas alaskensis).